Reading from the N-terminus, the 164-residue chain is Dehydrin Rab16C (164 aa).

Over residues 42-51 the composition is skewed to gly residues; sequence MGGHHAGAGG. Residues 42-164 form a disordered region; that stretch reads MGGHHAGAGG…KIKEKLPGQH (123 aa). Over residues 105–115 the composition is skewed to low complexity; that stretch reads GNNHQQQQMMG. A compositionally biased stretch (gly residues) spans 128–138; the sequence is GMTGAGTGTGV. Positions 147-164 are enriched in basic and acidic residues; the sequence is GEKKGFMDKIKEKLPGQH.

The protein belongs to the plant dehydrin family.

In Oryza sativa subsp. indica (Rice), this protein is Dehydrin Rab16C (RAB16C).